Consider the following 409-residue polypeptide: Palmitoyltransferase ZDHHC23 (409 aa).

Residues 1-87 (MTQKGSMKPV…RIPWLRGAKK (87 aa)) are Cytoplasmic-facing. A helical transmembrane segment spans residues 88-106 (VNISIIPPLVLLPVFLHVA). The Lumenal segment spans residues 107–109 (SWH). Residues 110 to 132 (FLLGVVVLTSLPVLALWYYYLTH) form a helical membrane-spanning segment. Topologically, residues 133–136 (RRKE) are cytoplasmic. Residues 137–157 (QTLFFLSLGLFSLGYMYYVFL) form a helical membrane-spanning segment. The Lumenal segment spans residues 158–165 (QEVVPKGR). A helical membrane pass occupies residues 166-186 (VGPVQLAVLTCGLFLILLALH). Residues 187 to 302 (RAKKNPGYLS…NSCVGESNHQ (116 aa)) lie on the Cytoplasmic side of the membrane. The segment at 215–255 (RKGQEKTKGFPGADMSGSLNNRTTKDDPKGSSKMPAGSPTK) is disordered. The 51-residue stretch at 259–309 (DWCAKCQLVRPARAWHCRICGICVRRMDHHCVWINSCVGESNHQAFILALL) folds into the DHHC domain. Residue cysteine 289 is the S-palmitoyl cysteine intermediate of the active site. Residues 303–323 (AFILALLIFLLTSVYGITLTL) form a helical membrane-spanning segment. Topologically, residues 324–331 (DTICRDRS) are lumenal. A helical transmembrane segment spans residues 332-352 (VFTALFYCPGVYANYSSALSF). Residue threonine 353 is a topological domain, cytoplasmic. A helical membrane pass occupies residues 354–374 (CVWYSVIITAGMAYIFLIQLI). At 375-409 (NISYNVTEREVQQALRQKTGRRLLCGLIVDTGLLG) the chain is on the lumenal side.

This sequence belongs to the DHHC palmitoyltransferase family. Interacts with NOS1.

It is found in the golgi apparatus membrane. The protein localises to the golgi apparatus. Its subcellular location is the trans-Golgi network membrane. It carries out the reaction L-cysteinyl-[protein] + hexadecanoyl-CoA = S-hexadecanoyl-L-cysteinyl-[protein] + CoA. In terms of biological role, palmitoyltransferase that could catalyze the addition of palmitate onto various protein substrates and be involved in a variety of cellular processes. Palmitoyltransferase that mediates palmitoylation of KCNMA1, regulating localization of KCNMA1 to the plasma membrane. May be involved in NOS1 regulation and targeting to the synaptic membrane. The chain is Palmitoyltransferase ZDHHC23 from Homo sapiens (Human).